The sequence spans 344 residues: MEGSRRRRGDGCTIVQCYTPRRFVGRWLSGLRSSKGKRDAGEEQEDDTRRYQLAPIRCSTSLNQLVMQDNKQNCRLNKSKEPETNTFESQSRESPLEVGIGSFLLYLVVASKTELDKMTNLRMQMEMFLLNAKEQLQKKDTPMSSNEASGFQFSPQEFSNLASSIFQESSSSVLQEEYTEFEVSEPEDYRRGTDCNSKLQAEVGRLPLGEKAEDRQTKHQIQRQCKLKDNEVTKSHIPEMVVSDERYGVCPYELDKKLHELLETRQQEELVKLETALNRVERRLQEKETEVSWWKDAARLLAQRVPESSRSGLEWCNPDSSTCSERSVPRSYEACSIHRTSFSR.

Thr19 carries the post-translational modification Phosphothreonine; by ASK7. Ser79 bears the Phosphoserine; by ASK7 mark. A phosphothreonine; by ASK7 mark is found at Thr84 and Thr86. A phosphoserine; by ASK7 mark is found at Ser91 and Ser94. A phosphothreonine; by ASK7 mark is found at Thr193, Thr217, and Thr233. Ser235 carries the post-translational modification Phosphoserine; by ASK7. The stretch at 262 to 297 (LETRQQEELVKLETALNRVERRLQEKETEVSWWKDA) forms a coiled coil. A phosphoserine; by ASK7 mark is found at Ser308, Ser309, Ser320, Ser321, and Ser336.

Component of a complex made of POLAR, BASL, ASK7/BIN2 and ASK3/SK12. Interacts with BASL, ASK7/BIN2 and ASK3/SK12. Phosphorylation by ASK7/BIN2 is increases turnover. As to expression, expressed in stomatal lineage cells with asymmetric division potential.

It is found in the cytoplasm. The protein localises to the cell cortex. Functionally, regulates asymmetric cell division (ACD), especially in stomatal-lineage cells. Acts as a stomatal lineage scaffold which regulates subcellular localization and transient polarization of kinases (e.g. ASK7/BIN2 and ASK3/SK12) involved in ACD in a BASL-dependent manner. Promotes the differentiation of both pavement cells and stomata. The chain is Protein POLAR LOCALIZATION DURING ASYMMETRIC DIVISION AND REDISTRIBUTION from Arabidopsis thaliana (Mouse-ear cress).